Reading from the N-terminus, the 434-residue chain is Enolase (434 aa).

Q167 serves as a coordination point for (2R)-2-phosphoglycerate. Catalysis depends on E209, which acts as the Proton donor. Residues D246, E291, and D318 each contribute to the Mg(2+) site. Residues K343, R372, S373, and K394 each contribute to the (2R)-2-phosphoglycerate site. K343 serves as the catalytic Proton acceptor.

This sequence belongs to the enolase family. As to quaternary structure, component of the RNA degradosome, a multiprotein complex involved in RNA processing and mRNA degradation. It depends on Mg(2+) as a cofactor.

It is found in the cytoplasm. The protein localises to the secreted. It localises to the cell surface. The catalysed reaction is (2R)-2-phosphoglycerate = phosphoenolpyruvate + H2O. It participates in carbohydrate degradation; glycolysis; pyruvate from D-glyceraldehyde 3-phosphate: step 4/5. Its function is as follows. Catalyzes the reversible conversion of 2-phosphoglycerate (2-PG) into phosphoenolpyruvate (PEP). It is essential for the degradation of carbohydrates via glycolysis. This Buchnera aphidicola subsp. Acyrthosiphon pisum (strain 5A) protein is Enolase.